The chain runs to 249 residues: Tetraspanin-18 (249 aa).

At 1–13 (MEGDCLSCMKYLM) the chain is on the cytoplasmic side. A helical membrane pass occupies residues 14-34 (FVFNFFIFLGGACLLGIGIWV). The Extracellular segment spans residues 35–49 (MVDPTGFREIVAANP). The chain crosses the membrane as a helical span at residues 50–70 (LLITGAYILLAMGGLLFLLGF). Residues 71-83 (LGCCGAVRENKCL) lie on the Cytoplasmic side of the membrane. A helical membrane pass occupies residues 84–104 (LLFFFLFILIIFLAELSAAIL). Residues 105 to 223 (AFIFRGNLTR…AFETYVYLAG (119 aa)) lie on the Extracellular side of the membrane. N111 and N129 each carry an N-linked (GlcNAc...) asparagine glycan. A helical membrane pass occupies residues 224–244 (ALAIGVLAIELFAMIFAMCLF). Topologically, residues 245 to 249 (RGIIQ) are cytoplasmic.

It belongs to the tetraspanin (TM4SF) family. In terms of assembly, interacts with ORAI1; this interaction regulates ORAI1 exit from the endoplasmic (ER), and/or Golgi, and trafficking to the cell surface.

The protein resides in the membrane. Functionally, plays a role in the cell surface localization of ORAI1 and may participate in the regulation of Ca(2+) signaling and the VWF release in response to inflammatory stimuli. This chain is Tetraspanin-18, found in Bos taurus (Bovine).